A 165-amino-acid chain; its full sequence is HTH-type transcriptional regulator IscR (165 aa).

The HTH rrf2-type domain maps to 2-131 (RLTSKGRYAV…NNITLAELVN (130 aa)). Residues 28 to 51 (LADISERQGISLSYLEQLFSRLRK) constitute a DNA-binding region (H-T-H motif). Residues C92, C98, and C104 each contribute to the [2Fe-2S] cluster site.

[2Fe-2S] cluster is required as a cofactor.

Its function is as follows. Regulates the transcription of several operons and genes involved in the biogenesis of Fe-S clusters and Fe-S-containing proteins. In Erwinia tasmaniensis (strain DSM 17950 / CFBP 7177 / CIP 109463 / NCPPB 4357 / Et1/99), this protein is HTH-type transcriptional regulator IscR.